We begin with the raw amino-acid sequence, 500 residues long: Neuronal pentraxin receptor (500 aa).

Over 1–2 (MK) the chain is Cytoplasmic. A helical; Signal-anchor for type II membrane protein transmembrane segment spans residues 3–23 (FLAVLLAAGMLAFLGAVICII). The Extracellular segment spans residues 24-500 (ASVPLAASPA…FDVCKGRAKA (477 aa)). The N-linked (GlcNAc...) asparagine glycan is linked to Asn42. The segment covering 42 to 63 (NASVASGAAASPGPQRSLSALH) has biased composition (low complexity). Disordered stretches follow at residues 42–81 (NASV…PAAS) and 162–183 (ESGL…ADGP). N-linked (GlcNAc...) asparagine glycosylation is present at Asn216. One can recognise a Pentraxin (PTX) domain in the interval 292 to 494 (DAFKISIPIR…GATKAAFDVC (203 aa)). Cys322 and Cys383 form a disulfide bridge. Positions 347, 425, 426, 427, and 437 each coordinate Ca(2+). Asn463 carries N-linked (GlcNAc...) asparagine glycosylation.

In terms of assembly, heteropentamer with NPTX1 and/or NPTX2. Also binds taipoxin-associated calcium-binding protein 49 (TCBP49/RCN2). Interacts with KLHL2. The cofactor is Ca(2+). Post-translationally, ubiquitinated by a cullin-RING-based BCR (BTB-CUL3-RBX1) E3 ubiquitin-protein ligase complex containing KLHL2.

The protein resides in the membrane. May be involved in mediating uptake of synaptic material during synapse remodeling or in mediating the synaptic clustering of AMPA glutamate receptors at a subset of excitatory synapses. In Homo sapiens (Human), this protein is Neuronal pentraxin receptor (NPTXR).